The sequence spans 173 residues: Crossover junction endodeoxyribonuclease RuvC (173 aa).

Residues D8, E67, and D139 contribute to the active site. Residues D8, E67, and D139 each contribute to the Mg(2+) site.

Belongs to the RuvC family. In terms of assembly, homodimer which binds Holliday junction (HJ) DNA. The HJ becomes 2-fold symmetrical on binding to RuvC with unstacked arms; it has a different conformation from HJ DNA in complex with RuvA. In the full resolvosome a probable DNA-RuvA(4)-RuvB(12)-RuvC(2) complex forms which resolves the HJ. It depends on Mg(2+) as a cofactor.

The protein resides in the cytoplasm. It carries out the reaction Endonucleolytic cleavage at a junction such as a reciprocal single-stranded crossover between two homologous DNA duplexes (Holliday junction).. The RuvA-RuvB-RuvC complex processes Holliday junction (HJ) DNA during genetic recombination and DNA repair. Endonuclease that resolves HJ intermediates. Cleaves cruciform DNA by making single-stranded nicks across the HJ at symmetrical positions within the homologous arms, yielding a 5'-phosphate and a 3'-hydroxyl group; requires a central core of homology in the junction. The consensus cleavage sequence is 5'-(A/T)TT(C/G)-3'. Cleavage occurs on the 3'-side of the TT dinucleotide at the point of strand exchange. HJ branch migration catalyzed by RuvA-RuvB allows RuvC to scan DNA until it finds its consensus sequence, where it cleaves and resolves the cruciform DNA. The sequence is that of Crossover junction endodeoxyribonuclease RuvC from Shewanella frigidimarina (strain NCIMB 400).